Reading from the N-terminus, the 69-residue chain is Protein translocase subunit SecE (69 aa).

Residues 43–63 form a helical membrane-spanning segment; it reads GLGICLLGFVGFVIHVPITYL.

The protein belongs to the SecE/SEC61-gamma family. Component of the Sec protein translocase complex. Heterotrimer consisting of SecY (alpha), SecG (beta) and SecE (gamma) subunits. The heterotrimers can form oligomers, although 1 heterotrimer is thought to be able to translocate proteins. Interacts with the ribosome. May interact with SecDF, and other proteins may be involved.

It localises to the cell membrane. In terms of biological role, essential subunit of the Sec protein translocation channel SecYEG. Clamps together the 2 halves of SecY. May contact the channel plug during translocation. This is Protein translocase subunit SecE from Methanococcus maripaludis (strain DSM 14266 / JCM 13030 / NBRC 101832 / S2 / LL).